Consider the following 704-residue polypeptide: Elongation factor G (704 aa).

A tr-type G domain is found at 8–290 (ARYRNIGISA…AVVDYLPSPV (283 aa)). GTP-binding positions include 17–24 (AHIDAGKT), 88–92 (DTPGH), and 142–145 (NKMD).

It belongs to the TRAFAC class translation factor GTPase superfamily. Classic translation factor GTPase family. EF-G/EF-2 subfamily.

It is found in the cytoplasm. In terms of biological role, catalyzes the GTP-dependent ribosomal translocation step during translation elongation. During this step, the ribosome changes from the pre-translocational (PRE) to the post-translocational (POST) state as the newly formed A-site-bound peptidyl-tRNA and P-site-bound deacylated tRNA move to the P and E sites, respectively. Catalyzes the coordinated movement of the two tRNA molecules, the mRNA and conformational changes in the ribosome. The protein is Elongation factor G of Pectobacterium carotovorum subsp. carotovorum (strain PC1).